The chain runs to 382 residues: MSAWVLPDHIADVLPSEARHIEELRRGLLDTARSYGYELVMPPLLEHLESLLTGTGEALDLQTFKLVDQLSGRSLGLRADTTQQVARIDAHLLNRQGVARLCYCGPVLHTRPDRPHATREPLQFGAEIYGHPGIEADIEAVLLSLECLRSAHVQEVSVDLADVRIVRSLLAGLPVGMHQLAQVHGALAAKDASELASLTRDFPSASREGLLALLQLYGDAAVLNEAENLLKPFPGAREALSDLRAIAARMDGVRVTFDLADLRGYAYYSGARFAIYAQGASDALVRGGRYDEVGAVFGRNRPAAGFSLDVKQLVGVVSAPSLRAAIRAPWGDGGALSAAIATLRRQGETVVCVLPGHGSEVDEFHCDRELVLVDGNWVVKAI.

It belongs to the class-II aminoacyl-tRNA synthetase family. HisZ subfamily. In terms of assembly, heteromultimer composed of HisG and HisZ subunits.

It localises to the cytoplasm. It functions in the pathway amino-acid biosynthesis; L-histidine biosynthesis; L-histidine from 5-phospho-alpha-D-ribose 1-diphosphate: step 1/9. In terms of biological role, required for the first step of histidine biosynthesis. May allow the feedback regulation of ATP phosphoribosyltransferase activity by histidine. The chain is ATP phosphoribosyltransferase regulatory subunit from Acidovorax sp. (strain JS42).